We begin with the raw amino-acid sequence, 116 residues long: MAMKIRLARGGSKKRPHYSIVASDSRMPRDGRFLEKLGTYNPLLAKDSEDRIKMNVERVQYWLSQGAQPTDRVARFLEAAGLKEKAVRNNPKAAVPGKRMAELAKKKAERAAASAE.

The interval 88-116 (RNNPKAAVPGKRMAELAKKKAERAAASAE) is disordered. Basic and acidic residues predominate over residues 99–110 (RMAELAKKKAER).

Belongs to the bacterial ribosomal protein bS16 family.

In Cereibacter sphaeroides (strain ATCC 17025 / ATH 2.4.3) (Rhodobacter sphaeroides), this protein is Small ribosomal subunit protein bS16.